Here is a 98-residue protein sequence, read N- to C-terminus: Ribonuclease kappa (98 aa).

Helical transmembrane passes span 13-33 and 65-85; these read ACGI…GIFF and VSYN…FSFC.

Belongs to the RNase K family. In terms of assembly, interacts with the proton translocation complex V0 of the V-ATPase. Interacts with ATP6AP1. In terms of tissue distribution, expressed in brain (at protein level).

Its subcellular location is the endomembrane system. It localises to the cytoplasmic vesicle. The protein localises to the clathrin-coated vesicle membrane. Its function is as follows. Endoribonuclease which preferentially cleaves ApU and ApG phosphodiester bonds. Hydrolyzes UpU bonds at a lower rate. Regulates the activity of vacuolar (H+)-ATPase (V-ATPase) which is responsible for acidifying and maintaining the pH of intracellular compartments. Required at an early stage of receptor-mediated endocytosis. The chain is Ribonuclease kappa (RNASEK) from Bos taurus (Bovine).